The following is a 341-amino-acid chain: UDP-glucose 4-epimerase (341 aa).

Belongs to the polysaccharide synthase family.

It catalyses the reaction UDP-alpha-D-glucose = UDP-alpha-D-galactose. In terms of biological role, epimerizes UDP-galactose to UDP-glucose. This Rickettsia conorii (strain ATCC VR-613 / Malish 7) protein is UDP-glucose 4-epimerase (capD).